A 197-amino-acid polypeptide reads, in one-letter code: C-type lectin domain family 3 member A (197 aa).

The N-terminal stretch at 1-24 is a signal peptide; the sequence is MAKNGLVIYILVITLLLDQTSCHA. 3 disulfides stabilise this stretch: C68-C78, C95-C191, and C167-C183. Positions 74–192 constitute a C-type lectin domain; the sequence is FHKKCYLAAE…CHSSKRYICE (119 aa).

Its subcellular location is the secreted. Its function is as follows. Promotes cell adhesion to laminin and fibronectin. The protein is C-type lectin domain family 3 member A (CLEC3A) of Bos taurus (Bovine).